A 484-amino-acid polypeptide reads, in one-letter code: PTS system MurNAc-GlcNAc-specific EIIBC component (484 aa).

Positions 5–87 constitute a PTS EIIB type-1 domain; the sequence is QQLAERIIAA…AELSGVKLGD (83 aa). Cys-27 (phosphocysteine intermediate; for EIIB activity) is an active-site residue. The 355-residue stretch at 130–484 folds into the PTS EIIC type-1 domain; that stretch reads KSIANIFIPL…AMRQTDLLGD (355 aa). The next 10 membrane-spanning stretches (helical) occupy residues 135 to 155, 160 to 180, 200 to 220, 234 to 254, 274 to 294, 305 to 325, 349 to 369, 384 to 404, 408 to 428, and 450 to 470; these read IFIPLIPAFIGAGLIGGIAAV, MVAGYISGAWITQLITVFNVI, FGATPGLGGVIGGTTLLTGIA, LQPGQGGIIGVIFAVWILSIV, IALLIVGLLTIFIFMPLAGFV, IISIGGVFSGFIIGASFLPLV, LLPIAAMAGAGQVGAALALWV, ALPVGFLGIGEPLIYGVTLPL, FLTACIGGGIGGAVIGGIGHI, and LGYIAGLLAAYAGGFVCTYLF.

The protein localises to the cell membrane. The catalysed reaction is N-acetyl-beta-D-muramate-(1-&gt;4)-N-acetyl-D-glucosamine(out) + N(pros)-phospho-L-histidyl-[protein] = 6-phospho-N-acetyl-beta-D-muramate-(1-&gt;4)-N-acetyl-D-glucosamine(in) + L-histidyl-[protein]. The protein operates within cell wall biogenesis; peptidoglycan recycling. The phosphoenolpyruvate-dependent sugar phosphotransferase system (sugar PTS), a major carbohydrate active transport system, catalyzes the phosphorylation of incoming sugar substrates concomitantly with their translocation across the cell membrane. This system is involved in the uptake and phosphorylation of MurNAc-GlcNAc, the principle peptidoglycan turnover product of S.aureus, yielding cytoplasmic MurNAc 6P-GlcNAc. This Staphylococcus aureus (strain Mu50 / ATCC 700699) protein is PTS system MurNAc-GlcNAc-specific EIIBC component.